Reading from the N-terminus, the 349-residue chain is Isopentenyl-diphosphate delta-isomerase (349 aa).

Position 6 to 7 (6 to 7 (RK)) interacts with substrate. FMN contacts are provided by residues 62-64 (AMT), S93, and N122. Q152 lines the substrate pocket. A Mg(2+)-binding site is contributed by E153. FMN-binding positions include K184, T214, 258-259 (GG), and 280-281 (AG).

It belongs to the IPP isomerase type 2 family. Homooctamer. Dimer of tetramers. Requires FMN as cofactor. NADPH serves as cofactor. Mg(2+) is required as a cofactor.

It is found in the cytoplasm. The catalysed reaction is isopentenyl diphosphate = dimethylallyl diphosphate. In terms of biological role, involved in the biosynthesis of isoprenoids. Catalyzes the 1,3-allylic rearrangement of the homoallylic substrate isopentenyl (IPP) to its allylic isomer, dimethylallyl diphosphate (DMAPP). The polypeptide is Isopentenyl-diphosphate delta-isomerase (Bacillus cereus (strain 03BB102)).